The sequence spans 167 residues: Thioredoxin M-type, chloroplastic (167 aa).

A chloroplast-targeting transit peptide spans 1 to 53; it reads MAMETCFRAWALHAPAGSKDRLLVGNLVLPSKRALAPLSVGRVATRRPRHVCQ. The Thioredoxin domain maps to 54–165; sequence SKNAVDEVVV…LTTLIDKYIG (112 aa). A disulfide bridge connects residues cysteine 89 and cysteine 92.

It belongs to the thioredoxin family. Plant M-type subfamily. As to quaternary structure, forms a complex with heterodimeric ferredoxin-thioredoxin reductase (FTR) and ferredoxin.

The protein localises to the plastid. It is found in the chloroplast. In terms of biological role, participates in various redox reactions through the reversible oxidation of the active center dithiol to a disulfide. The M form is known to activate NADP-malate dehydrogenase. This chain is Thioredoxin M-type, chloroplastic (TRM1), found in Zea mays (Maize).